We begin with the raw amino-acid sequence, 300 residues long: Flaviolin linalyltransferase (300 aa).

This sequence belongs to the aromatic prenyltransferase family. As to quaternary structure, monomer.

It carries out the reaction flaviolin + (2E)-geranyl diphosphate = 3-linalylflaviolin + diphosphate. With respect to regulation, does not require magnesium or any other divalent metal ions for activity. Functionally, involved in the biosynthesis of furanonaphthoquinone I (FNQ I). Catalyzes C- and O-prenylations of different phenolic substrates. With flaviolin as substrate, catalyzes the formation of a carbon-carbon-bond between C-3 (rather than C-1) of geranyl diphosphate and C-3 of flaviolin. With 1,3-dihydroxynaphthalene and 4-hydroxybenzoate as substrates, catalyzes O-prenylations. The protein is Flaviolin linalyltransferase of Streptomyces virginiae (Streptomyces cinnamonensis).